We begin with the raw amino-acid sequence, 320 residues long: GMP reductase (320 aa).

Cys174 acts as the Thioimidate intermediate in catalysis. Residue 203-226 (IIADGGLRVHGDIAKSIRMGASFC) participates in NADP(+) binding.

It belongs to the IMPDH/GMPR family. GuaC type 2 subfamily.

The enzyme catalyses IMP + NH4(+) + NADP(+) = GMP + NADPH + 2 H(+). Its function is as follows. Catalyzes the irreversible NADPH-dependent deamination of GMP to IMP. It functions in the conversion of nucleobase, nucleoside and nucleotide derivatives of G to A nucleotides, and in maintaining the intracellular balance of A and G nucleotides. In Mycoplasma mycoides subsp. mycoides SC (strain CCUG 32753 / NCTC 10114 / PG1), this protein is GMP reductase.